Here is a 257-residue protein sequence, read N- to C-terminus: tRNA (cytidine/uridine/adenosine-2'-O-)-methyltransferase TrmJ (257 aa).

S-adenosyl-L-methionine is bound by residues 79–82, 115–117, I135, and 142–144; these read TSAR, GRE, and GSL.

It belongs to the class IV-like SAM-binding methyltransferase superfamily. RNA methyltransferase TrmH family. Homodimer.

The protein resides in the cytoplasm. It catalyses the reaction cytidine(32) in tRNA + S-adenosyl-L-methionine = 2'-O-methylcytidine(32) in tRNA + S-adenosyl-L-homocysteine + H(+). It carries out the reaction uridine(32) in tRNA + S-adenosyl-L-methionine = 2'-O-methyluridine(32) in tRNA + S-adenosyl-L-homocysteine + H(+). The catalysed reaction is adenosine(32) in tRNA + S-adenosyl-L-methionine = 2'-O-methyladenosine(32) in tRNA + S-adenosyl-L-homocysteine + H(+). Catalyzes the formation of 2'O-methylated cytidine (Cm32), 2'O-methylated uridine (Um32) or 2'O-methylated adenosine (Am32) at position 32 in tRNA. Confers resistance to oxidative stress. The chain is tRNA (cytidine/uridine/adenosine-2'-O-)-methyltransferase TrmJ from Pseudomonas aeruginosa (strain UCBPP-PA14).